Reading from the N-terminus, the 87-residue chain is Small ribosomal subunit protein bS20 (87 aa).

The interval 1-22 (MANIKSQIKRNKTNEKARLRNQ) is disordered.

This sequence belongs to the bacterial ribosomal protein bS20 family.

Its function is as follows. Binds directly to 16S ribosomal RNA. The protein is Small ribosomal subunit protein bS20 of Corynebacterium glutamicum (strain R).